A 256-amino-acid chain; its full sequence is Pimeloyl-[acyl-carrier protein] methyl ester esterase (256 aa).

The AB hydrolase-1 domain occupies 15-242 (HLVLLHGWGL…AAHAPFISHP (228 aa)). Substrate is bound by residues tryptophan 22, 82-83 (SL), and 143-147 (FLALQ). Serine 82 serves as the catalytic Nucleophile. Active-site residues include aspartate 207 and histidine 235. Histidine 235 provides a ligand contact to substrate.

Belongs to the AB hydrolase superfamily. Carboxylesterase BioH family. As to quaternary structure, monomer.

It localises to the cytoplasm. It carries out the reaction 6-carboxyhexanoyl-[ACP] methyl ester + H2O = 6-carboxyhexanoyl-[ACP] + methanol + H(+). Its pathway is cofactor biosynthesis; biotin biosynthesis. The physiological role of BioH is to remove the methyl group introduced by BioC when the pimeloyl moiety is complete. It allows to synthesize pimeloyl-ACP via the fatty acid synthetic pathway through the hydrolysis of the ester bonds of pimeloyl-ACP esters. The polypeptide is Pimeloyl-[acyl-carrier protein] methyl ester esterase (Salmonella agona (strain SL483)).